A 320-amino-acid chain; its full sequence is MPGYCFEIFNVFDFFDKTNKANFWEFVRLEHAQVMDIPISGTVNHFLKPENLRKNRYHDVTCWDNSRVVLSSHGSKMYDYGDSDGKKIIVTSQDSDSTYIHASFVNGFKEANKFICCQGPKESTSGDFWKMVSEHNSSVIVSLTETDDEDQVCYEYWVKEEDYELAFGRYVVKTLEIIEESSFTRTRLRLTDVSSDTSREIHHFWYPHWSDYGNPTNPAEILNLISKVNQKRKEMKKTADSQPGPIVVHCSAGIGRTGTFCTIDNALSQLRKEQTVCLPQTVLKIRKQRHSSVFLPEQYAFCYKAVRYALIREIKKKFFY.

One can recognise a Tyrosine-protein phosphatase domain in the interval 22-309; it reads NFWEFVRLEH…AFCYKAVRYA (288 aa). The Phosphocysteine intermediate role is filled by C250.

It belongs to the protein-tyrosine phosphatase family.

It carries out the reaction O-phospho-L-tyrosyl-[protein] + H2O = L-tyrosyl-[protein] + phosphate. Functionally, suppresses host immune cell adhesion and phagocytosis. The protein is Tyrosine phosphatase H3 (H3) of Microplitis demolitor (Parasitoid wasp).